The chain runs to 292 residues: tRNA-splicing endonuclease (292 aa).

Active-site residues include Y231, H238, and K267.

It belongs to the tRNA-intron endonuclease family. Archaeal long subfamily. As to quaternary structure, homodimer.

It catalyses the reaction pretRNA = a 3'-half-tRNA molecule with a 5'-OH end + a 5'-half-tRNA molecule with a 2',3'-cyclic phosphate end + an intron with a 2',3'-cyclic phosphate and a 5'-hydroxyl terminus.. Functionally, endonuclease that removes tRNA introns. Cleaves pre-tRNA at the 5'- and 3'-splice sites to release the intron. The products are an intron and two tRNA half-molecules bearing 2',3' cyclic phosphate and 5'-OH termini. Recognizes a pseudosymmetric substrate in which 2 bulged loops of 3 bases are separated by a stem of 4 bp. This Thermoplasma volcanium (strain ATCC 51530 / DSM 4299 / JCM 9571 / NBRC 15438 / GSS1) protein is tRNA-splicing endonuclease.